Here is a 109-residue protein sequence, read N- to C-terminus: Thioredoxin 1 (109 aa).

The 108-residue stretch at 2–109 (SDKIIHLTDD…LKEFLDANLA (108 aa)) folds into the Thioredoxin domain. Catalysis depends on nucleophile residues cysteine 33 and cysteine 36. Cysteine 33 and cysteine 36 are joined by a disulfide. Lysine 70 carries the post-translational modification N6-acetyllysine.

Belongs to the thioredoxin family. In terms of assembly, monomer.

Functionally, participates in various redox reactions through the reversible oxidation of its active center dithiol to a disulfide and catalyzes dithiol-disulfide exchange reactions. The protein is Thioredoxin 1 (trxA) of Escherichia coli O157:H7.